The primary structure comprises 291 residues: RPE-retinal G protein-coupled receptor (291 aa).

Over 1-15 (MAETSALPTGFGELE) the chain is Extracellular. The helical transmembrane segment at 16 to 36 (VLAVGMVLLVEALSGLSLNTL) threads the bilayer. Over 37 to 52 (TIFSFCKTPELRTPCH) the chain is Cytoplasmic. Residues 53–73 (LLVLSLALADSGISLNALVAA) traverse the membrane as a helical segment. Over 74–91 (TSSLLRRWPYGSDGCQAH) the chain is Extracellular. Cysteines 88 and 162 form a disulfide. A helical transmembrane segment spans residues 92-112 (GFQGFVTALASICSSAAIAWG). Residues 113-130 (RYHHYCTRSQLAWNSAVS) lie on the Cytoplasmic side of the membrane. A helical transmembrane segment spans residues 131–151 (LVLFVWLSSAFWAALPLLGWG). The Extracellular segment spans residues 152–175 (HYDYEPLGTCCTLDYSKGDRNFTS). Residue asparagine 172 is glycosylated (N-linked (GlcNAc...) asparagine). A helical transmembrane segment spans residues 176–196 (FLFTMSFFNFAMPLFITITSY). Residues 197–219 (SLMEQKLGKSGHLQVNTTLPART) lie on the Cytoplasmic side of the membrane. Residues 220–240 (LLLGWGPYAILYLYAVIADVT) traverse the membrane as a helical segment. Topologically, residues 241–247 (SISPKLQ) are extracellular. A helical transmembrane segment spans residues 248 to 268 (MVPALIAKMVPTINAINYALG). Lysine 255 carries the N6-(retinylidene)lysine modification. Over 269 to 291 (NEMVCRGIWQCLSPQKREKDRTK) the chain is Cytoplasmic.

It belongs to the G-protein coupled receptor 1 family. Opsin subfamily. In terms of processing, covalently binds all-trans- and 11-cis-retinal. Preferentially expressed at high levels in the retinal pigment epithelium (RPE) and Mueller cells of the neural retina.

Its subcellular location is the membrane. Its function is as follows. Receptor for all-trans- and 11-cis-retinal. Binds preferentially to the former and may catalyze the isomerization of the chromophore by a retinochrome-like mechanism. This chain is RPE-retinal G protein-coupled receptor (RGR), found in Homo sapiens (Human).